Reading from the N-terminus, the 286-residue chain is Probable ketoamine kinase YniA (286 aa).

91–93 (DYL) contributes to the ATP binding site. Residue D193 is the Proton acceptor of the active site.

It belongs to the fructosamine kinase family.

In terms of biological role, ketoamine kinase that phosphorylates ketoamines on the third carbon of the sugar moiety to generate ketoamine 3-phosphate. This is Probable ketoamine kinase YniA (yniA) from Escherichia coli O157:H7.